The sequence spans 479 residues: Poly(A) polymerase catalytic subunit (479 aa).

Residues Asp202 and Asp204 contribute to the active site. Ca(2+) contacts are provided by Asp202, Asp204, and Asp253.

It belongs to the poxviridae poly(A) polymerase catalytic subunit family. Heterodimer of a large (catalytic) subunit and a small (regulatory) subunit.

It catalyses the reaction RNA(n) + ATP = RNA(n)-3'-adenine ribonucleotide + diphosphate. Polymerase that creates the 3'-poly(A) tail of mRNA's. The sequence is that of Poly(A) polymerase catalytic subunit (OPG063) from Camelus.